The chain runs to 187 residues: Accessory gene regulator protein B (187 aa).

A run of 5 helical transmembrane segments spans residues 49-69, 82-102, 107-127, 143-163, and 164-184; these read LAYI…FYLI, FWCY…VLHF, TLMM…APAA, YFSI…KEPY, and TQFI…IYYS.

It belongs to the AgrB family.

The protein resides in the cell membrane. In terms of biological role, essential for the production of a quorum sensing system signal molecule, the autoinducing peptide (AIP). This quorum sensing system is responsible for the regulation of the expression of virulence factor genes. Involved in the proteolytic processing of AgrD, the precursor of AIP. In Staphylococcus aureus (strain MRSA252), this protein is Accessory gene regulator protein B.